The sequence spans 404 residues: Endophilin-B2 (404 aa).

N-acetylmethionine is present on Met-1. The segment at 1-27 is membrane-binding amphipathic helix; it reads MDFNMKKLASDAGIFFTRAVQFTEEKF. Residue Ser-10 is modified to Phosphoserine. One can recognise a BAR domain in the interval 24-291; the sequence is EEKFGQAEKT…LGSSQGAIFP (268 aa). Positions 209–239 form a coiled coil; that stretch reads SASALWNDEVDKAEQELRAAQTEFDRQAEVT. The SH3 domain occupies 344–404; that stretch reads SGTRKARVLY…VPVTYLELLS (61 aa). Ser-404 is subject to Phosphoserine.

It belongs to the endophilin family. As to quaternary structure, homodimer, and heterodimer with SH3GLB1.

It is found in the cytoplasm. This Rattus norvegicus (Rat) protein is Endophilin-B2.